The following is a 356-amino-acid chain: Growth hormone-regulated TBC protein 1-A (356 aa).

The segment at 1–29 (MEERDRTGRTGQPQHRINQPSTARERANS) is disordered. The segment covering 9-22 (RTGQPQHRINQPST) has biased composition (polar residues). One can recognise a Rab-GAP TBC domain in the interval 87 to 277 (GVPNEHRPLV…RIWDCLFYEG (191 aa)).

May act as a GTPase-activating protein for Rab family protein(s). In Danio rerio (Zebrafish), this protein is Growth hormone-regulated TBC protein 1-A (grtp1a).